The sequence spans 382 residues: MTEYLFTSESVSEGHPDKIADQISDAVLDAILEKDLKARVACETLVKTGMVVIAGEIGTSTWVDLEDLVRKTICTIGYTHSEMGFDGRTCAVLNAIGKQSGDIAQGVDRGEAKLQGAGDQGLMFGYACTETPTLMPAPITYAHRLVEKQAQLRHSGALPWLRPDAKSQITFRYRDNTIVGVDAIVLSTQHSEEISLKELTEAVREEIIAPIVPSKWIDKKTRFHINPTGKFVIGGPLGDCGLTGRKIIVDTYGGAARHGGGAFSGKDPSKVDRSAAYAARYVAKNVVAAGLATRCEVQLSYAIGIAEPTSIMVNTFGTGTIDDAEIVRRVQAVFDLTPYGIIEMLDLVRPIYQKTAVYGHFGRELPQFTWEKTDRSDALQQA.

His-15 provides a ligand contact to ATP. Residue Asp-17 coordinates Mg(2+). Glu-43 serves as a coordination point for K(+). Residues Glu-56 and Gln-99 each contribute to the L-methionine site. A flexible loop region spans residues 99–109; that stretch reads QSGDIAQGVDR. Residues 164–166, 230–231, Asp-239, 245–246, Ala-262, and Lys-266 each bind ATP; these read DAK, KF, and RK. Asp-239 provides a ligand contact to L-methionine. Position 270 (Lys-270) interacts with L-methionine.

This sequence belongs to the AdoMet synthase family. As to quaternary structure, homotetramer; dimer of dimers. Requires Mg(2+) as cofactor. The cofactor is K(+).

It localises to the cytoplasm. It carries out the reaction L-methionine + ATP + H2O = S-adenosyl-L-methionine + phosphate + diphosphate. Its pathway is amino-acid biosynthesis; S-adenosyl-L-methionine biosynthesis; S-adenosyl-L-methionine from L-methionine: step 1/1. Its function is as follows. Catalyzes the formation of S-adenosylmethionine (AdoMet) from methionine and ATP. The overall synthetic reaction is composed of two sequential steps, AdoMet formation and the subsequent tripolyphosphate hydrolysis which occurs prior to release of AdoMet from the enzyme. The chain is S-adenosylmethionine synthase from Dichelobacter nodosus (strain VCS1703A).